The chain runs to 334 residues: GTPase Obg (334 aa).

Residues 1–159 (MRFVDEVVIK…KEVRLELNLL (159 aa)) form the Obg domain. The 172-residue stretch at 160 to 331 (ADIALLGLPN…LAKKLNEFLH (172 aa)) folds into the OBG-type G domain. Residues 166–173 (GLPNAGKS), 191–195 (FTTMY), 212–215 (DIPG), 282–285 (NKID), and 312–314 (SAA) each bind GTP. Mg(2+) is bound by residues S173 and T193.

The protein belongs to the TRAFAC class OBG-HflX-like GTPase superfamily. OBG GTPase family. As to quaternary structure, monomer. Mg(2+) serves as cofactor.

It localises to the cytoplasm. Its function is as follows. An essential GTPase which binds GTP, GDP and possibly (p)ppGpp with moderate affinity, with high nucleotide exchange rates and a fairly low GTP hydrolysis rate. Plays a role in control of the cell cycle, stress response, ribosome biogenesis and in those bacteria that undergo differentiation, in morphogenesis control. This chain is GTPase Obg, found in Francisella philomiragia subsp. philomiragia (strain ATCC 25017 / CCUG 19701 / FSC 153 / O#319-036).